The sequence spans 1300 residues: Histone-lysine N-methyltransferase Suv4-20 (1300 aa).

Positions 1–136 (MVVGSNHTRR…GSGSVVSGLN (136 aa)) are disordered. A compositionally biased stretch (low complexity) spans 14-62 (GSRFTNSSSSSSTSGGPTASASSTTSVTSSLATNSTSTSTAAALLSSMS). A compositionally biased stretch (polar residues) spans 79-97 (QTNQQHHQVAHSQPHATHY). Positions 116–128 (GSGGGSAGSGSGS) are enriched in gly residues. In terms of domain architecture, SET spans 255 to 366 (EACYRYTLEE…VGEEITCFYG (112 aa)). 5 disordered regions span residues 432-490 (SRAN…GKEA), 535-574 (QQHH…QQMA), 669-744 (HQSQ…SAGR), 756-856 (NNNI…TQGI), and 891-927 (ALGG…VEPL). Over residues 435-451 (NSTNSTSNSNSNTNDST) the composition is skewed to low complexity. Over residues 452 to 462 (GPSETSSTNGL) the composition is skewed to polar residues. Positions 536–557 (QHHHQHHFHHHHHHHHHHHNHG) are enriched in basic residues. A compositionally biased stretch (low complexity) spans 564–574 (AEATAAVQQMA). Basic and acidic residues-rich tracts occupy residues 677-688 (RRSERQKEKLTD), 698-707 (QQKKEQKQQD), and 722-735 (QPEK…EQQK). The segment covering 756 to 821 (NNNIATTTNS…SSIPSSTSSE (66 aa)) has biased composition (low complexity). Polar residues-rich tracts occupy residues 822–834 (NQQQ…SCSP) and 911–923 (EPTT…TISN). Phosphoserine occurs at positions 831 and 833. Threonine 930 carries the post-translational modification Phosphothreonine. 4 disordered regions span residues 956 to 988 (SLSN…NLTG), 1006 to 1188 (EHGN…PNGK), 1212 to 1233 (SPGQ…GGSG), and 1263 to 1300 (QISQ…HGQK). Residues 1009–1029 (NDDDEDEEEDDEEPAAEEEEE) show a composition bias toward acidic residues. Positions 1041-1055 (KKQRKKQRSRSRSSQ) are enriched in basic residues. Low complexity-rich tracts occupy residues 1117–1145 (ASST…STSA) and 1161–1178 (SPSS…TSTT). A compositionally biased stretch (basic residues) spans 1289 to 1300 (SHHHTNNHHGQK).

Belongs to the class V-like SAM-binding methyltransferase superfamily. Histone-lysine methyltransferase family. Suvar4-20 subfamily.

Its subcellular location is the nucleus. The protein localises to the chromosome. The catalysed reaction is L-lysyl(20)-[histone H4] + S-adenosyl-L-methionine = N(6)-methyl-L-lysyl(20)-[histone H4] + S-adenosyl-L-homocysteine + H(+). It catalyses the reaction N(6)-methyl-L-lysyl(20)-[histone H4] + S-adenosyl-L-methionine = N(6),N(6)-dimethyl-L-lysyl(20)-[histone H4] + S-adenosyl-L-homocysteine + H(+). The enzyme catalyses N(6),N(6)-dimethyl-L-lysyl(20)-[histone H4] + S-adenosyl-L-methionine = N(6),N(6),N(6)-trimethyl-L-lysyl(20)-[histone H4] + S-adenosyl-L-homocysteine + H(+). Functionally, histone methyltransferase that specifically trimethylates 'Lys-20' of histone H4. H4 'Lys-20' trimethylation represents a specific tag for epigenetic transcriptional repression. Mainly functions in pericentric heterochromatin regions, thereby playing a central role in the establishment of constitutive heterochromatin in these regions. Acts as a dominant suppressor of position-effect variegation. In Drosophila melanogaster (Fruit fly), this protein is Histone-lysine N-methyltransferase Suv4-20 (Hmt4-20).